We begin with the raw amino-acid sequence, 156 residues long: MADQRNQADKPTTRIPDDEWEAIVANVPLVSVDLVIRHEGGVLLGFRENEPARGEWFVPGGTVFKNETLTDALYRVADEELGVDVTIESRLGTFEHFYDTSDVEGIDSKHYLATAFEVTLDDDNLEMDTQHSQLKVFEPPYEGLHPYVERYLDALD.

Residues 14–15 (RI) and R47 contribute to the substrate site. A Nudix hydrolase domain is found at 25–156 (ANVPLVSVDL…YVERYLDALD (132 aa)). Mg(2+) contacts are provided by G60, E80, and Q130. Positions 61-82 (GTVFKNETLTDALYRVADEELG) match the Nudix box motif.

The protein belongs to the Nudix hydrolase family. Requires Mg(2+) as cofactor.

It functions in the pathway protein modification; protein glycosylation. The protein operates within cell surface structure biogenesis; S-layer biogenesis. In terms of biological role, nudix hydrolase involved in N-glycan biosynthetic pathway that takes place under low-salt conditions (1.75 M instead of 3.4 M). Participates in the formation of the tetrasaccharide present at 'Asn-532' of S-layer glycoprotein Csg, consisting of a sulfated hexose, 2 hexoses and rhamnose. Mediates attachment of sugar 3 in the tetrasaccharide. In Haloferax volcanii (strain ATCC 29605 / DSM 3757 / JCM 8879 / NBRC 14742 / NCIMB 2012 / VKM B-1768 / DS2) (Halobacterium volcanii), this protein is Low-salt glycan biosynthesis protein Agl8 (agl8).